We begin with the raw amino-acid sequence, 705 residues long: Crooked neck-like protein 1 (705 aa).

HAT repeat units follow at residues 55-87 (DYRL…WEES), 89-121 (KDLT…MEMK), 123-155 (KNIN…MEDM), 157-188 (GNYP…FEQR), 190-221 (KLFE…FEER), 223-258 (GNIE…FEEK), 260-294 (KEIE…FEKQ), 304-336 (VVLG…MEEI), 338-372 (GEIE…LWIN), 382-418 (KDME…FEIR), 420-451 (LNLD…LEIE), 453-485 (GNFD…LETE), 487-521 (GETV…SEIQ), and 523-554 (KQFD…FVHS). A disordered region spans residues 559-591 (QQQKQRQQQQEEDGDSNTTKKDGGDDDNNDDIN). One copy of the HAT 15 repeat lies at 597-629 (IFIEAHKSLSNSDKEERLLLLESWKEFEQTFGN).

The protein belongs to the crooked-neck family. Identified in the spliceosome C complex.

It localises to the nucleus. The protein resides in the nucleus speckle. Its function is as follows. Involved in pre-mRNA splicing process. The chain is Crooked neck-like protein 1 (crnkl1) from Dictyostelium discoideum (Social amoeba).